Reading from the N-terminus, the 481-residue chain is uncharacterized protein (481 aa).

Basic residues predominate over residues 1 to 18 (MSRLPSKTKYHSSHRSLN). The segment at 1-37 (MSRLPSKTKYHSSHRSLNRKTPLLQRSSETNSLRESG) is disordered. Residues 24 to 34 (LQRSSETNSLR) show a composition bias toward polar residues. Transmembrane regions (helical) follow at residues 172–191 (SIST…AGAI) and 195–214 (AAAG…YLCW).

It is found in the membrane. This is an uncharacterized protein from Coxiella burnetii (strain RSA 493 / Nine Mile phase I).